The sequence spans 248 residues: Granulin (248 aa).

This sequence belongs to the polyhedrin family.

Component of the virus occlusion bodies, which are large proteinaceous structures, that protect the virus from the outside environment for extended periods until they are ingested by insect larvae. In Trichoplusia ni (Cabbage looper), this protein is Granulin.